The sequence spans 613 residues: Secretogranin-2 (613 aa).

Positions M1–A27 are cleaved as a signal peptide. Residues A28 to F30 constitute a propeptide that is removed on maturation. Disordered stretches follow at residues Q67–S105 and Q119–M146. Residues E92 to S105 are compositionally biased toward basic and acidic residues. Y150 is modified (sulfotyrosine). Phosphoserine is present on residues S173, S267, S428, S528, S551, and S552. Over residues E257 to R283 the composition is skewed to basic and acidic residues. Residues E257–L287 are disordered. Positions H546–K557 are enriched in basic and acidic residues. The tract at residues H546–Y580 is disordered.

The protein belongs to the chromogranin/secretogranin protein family. As to quaternary structure, interacts with Secretogranin III/SCG3. Highest levels detected in anterior pituitary followed by adrenal medulla and posterior pituitary (at protein level). In the brain, high levels are found in the hypothalamus, comparable to those present in posterior pituitary with two- to six-fold lower levels present in the other brain regions investigated including caudate nucleus, hippocampus, thalamus and brainstem (at protein level).

Its subcellular location is the secreted. Functionally, neuroendocrine protein of the granin family that regulates the biogenesis of secretory granules. The polypeptide is Secretogranin-2 (SCG2) (Bos taurus (Bovine)).